A 446-amino-acid polypeptide reads, in one-letter code: Glutamine synthetase (446 aa).

The region spanning 14–106 (NNVKFIRFQF…VICDVYTTNG (93 aa)) is the GS beta-grasp domain. The 334-residue stretch at 113-446 (PRGCLKRVLA…DWETKQYLKI (334 aa)) folds into the GS catalytic domain. Residues glutamate 137 and glutamate 139 each coordinate Mg(2+). An ATP-binding site is contributed by glutamate 187. Mg(2+)-binding residues include glutamate 192 and glutamate 199. L-glutamate is bound by residues 243–244 (NG) and glycine 244. Histidine 248 is a Mg(2+) binding site. ATP-binding positions include 250–252 (HQS) and serine 252. L-glutamate contacts are provided by arginine 301, glutamate 307, and arginine 319. Positions 319, 324, and 331 each coordinate ATP. Glutamate 336 is a Mg(2+) binding site. Position 338 (arginine 338) interacts with L-glutamate.

This sequence belongs to the glutamine synthetase family. As to quaternary structure, oligomer of 12 subunits arranged in the form of two hexagons. The cofactor is Mg(2+).

Its subcellular location is the cytoplasm. The catalysed reaction is L-glutamate + NH4(+) + ATP = L-glutamine + ADP + phosphate + H(+). In terms of biological role, probably involved in nitrogen metabolism via ammonium assimilation. Catalyzes the ATP-dependent biosynthesis of glutamine from glutamate and ammonia. The chain is Glutamine synthetase from Methanococcus maripaludis (strain DSM 14266 / JCM 13030 / NBRC 101832 / S2 / LL).